A 156-amino-acid polypeptide reads, in one-letter code: Small ribosomal subunit protein uS7 (156 aa).

This sequence belongs to the universal ribosomal protein uS7 family. As to quaternary structure, part of the 30S ribosomal subunit. Contacts proteins S9 and S11.

Functionally, one of the primary rRNA binding proteins, it binds directly to 16S rRNA where it nucleates assembly of the head domain of the 30S subunit. Is located at the subunit interface close to the decoding center, probably blocks exit of the E-site tRNA. This chain is Small ribosomal subunit protein uS7, found in Shewanella sp. (strain MR-7).